The primary structure comprises 398 residues: Acetate kinase (398 aa).

Mg(2+) is bound at residue asparagine 8. Residue lysine 15 coordinates ATP. Arginine 89 serves as a coordination point for substrate. The active-site Proton donor/acceptor is aspartate 146. ATP is bound by residues histidine 206–glycine 210, aspartate 283–arginine 285, and glycine 331–asparagine 335. Glutamate 383 contributes to the Mg(2+) binding site.

The protein belongs to the acetokinase family. As to quaternary structure, homodimer. It depends on Mg(2+) as a cofactor. Requires Mn(2+) as cofactor.

The protein resides in the cytoplasm. The enzyme catalyses acetate + ATP = acetyl phosphate + ADP. It participates in metabolic intermediate biosynthesis; acetyl-CoA biosynthesis; acetyl-CoA from acetate: step 1/2. Catalyzes the formation of acetyl phosphate from acetate and ATP. Can also catalyze the reverse reaction. This chain is Acetate kinase, found in Streptococcus pyogenes serotype M6 (strain ATCC BAA-946 / MGAS10394).